Consider the following 291-residue polypeptide: Probable peptide ABC transporter permease protein y4tQ (291 aa).

Helical transmembrane passes span 28–48 (LVLL…AAPL), 92–112 (LIVG…IGVI), 137–157 (LLAI…IVAI), 213–233 (ATVC…GVGV), and 249–269 (LFLA…AVTV). The region spanning 88 to 276 (ARISLIVGLL…VTVLAVNLLG (189 aa)) is the ABC transmembrane type-1 domain.

The protein belongs to the binding-protein-dependent transport system permease family. OppBC subfamily.

The protein resides in the cell inner membrane. Probably part of the binding-protein-dependent transport system y4tOPQRS for a peptide. Probably responsible for the translocation of the substrate across the membrane. In Sinorhizobium fredii (strain NBRC 101917 / NGR234), this protein is Probable peptide ABC transporter permease protein y4tQ.